The chain runs to 447 residues: Argininosuccinate synthase (447 aa).

Residues 17–25 and Ala-43 each bind ATP; that span reads AFSGGLDTS. Residue Tyr-99 coordinates L-citrulline. ATP contacts are provided by Gly-129 and Thr-131. 3 residues coordinate L-aspartate: Thr-131, Asn-135, and Asp-136. Asn-135 contacts L-citrulline. Asp-136 is a binding site for ATP. Residues Arg-139 and Ser-192 each contribute to the L-citrulline site. Asp-194 is a binding site for ATP. L-citrulline contacts are provided by Thr-201, Glu-203, and Glu-280.

It belongs to the argininosuccinate synthase family. Type 2 subfamily. In terms of assembly, homotetramer.

The protein localises to the cytoplasm. The enzyme catalyses L-citrulline + L-aspartate + ATP = 2-(N(omega)-L-arginino)succinate + AMP + diphosphate + H(+). It functions in the pathway amino-acid biosynthesis; L-arginine biosynthesis; L-arginine from L-ornithine and carbamoyl phosphate: step 2/3. The sequence is that of Argininosuccinate synthase from Salmonella heidelberg (strain SL476).